We begin with the raw amino-acid sequence, 312 residues long: Ribosomal protein L11 methyltransferase (312 aa).

Positions 160, 181, 203, and 246 each coordinate S-adenosyl-L-methionine.

This sequence belongs to the methyltransferase superfamily. PrmA family.

It is found in the cytoplasm. It carries out the reaction L-lysyl-[protein] + 3 S-adenosyl-L-methionine = N(6),N(6),N(6)-trimethyl-L-lysyl-[protein] + 3 S-adenosyl-L-homocysteine + 3 H(+). In terms of biological role, methylates ribosomal protein L11. The sequence is that of Ribosomal protein L11 methyltransferase from Staphylococcus aureus (strain JH1).